The primary structure comprises 564 residues: Septation ring formation regulator EzrA (564 aa).

Residues 1-4 (MVLF) lie on the Extracellular side of the membrane. The helical transmembrane segment at 5-23 (IILAILVVILIAIGVLFYM) threads the bilayer. Over 24 to 564 (RSNKRNLIEK…KHIEEQVIKE (541 aa)) the chain is Cytoplasmic. 4 coiled-coil regions span residues 84 to 126 (VEEK…HQVT), 165 to 223 (EAAE…LIRE), 271 to 303 (MISR…YEVK), and 350 to 435 (VRQF…RRLL).

It belongs to the EzrA family.

The protein localises to the cell membrane. Negative regulator of FtsZ ring formation; modulates the frequency and position of FtsZ ring formation. Inhibits FtsZ ring formation at polar sites. Interacts either with FtsZ or with one of its binding partners to promote depolymerization. This Staphylococcus epidermidis (strain ATCC 12228 / FDA PCI 1200) protein is Septation ring formation regulator EzrA.